Reading from the N-terminus, the 99-residue chain is Cell division protein FtsB (99 aa).

The Cytoplasmic segment spans residues 1–3 (MKF). The chain crosses the membrane as a helical span at residues 4–21 (FVIALIVLLGLLQYRLWS). Residues 22-99 (GSNSLPEYFV…GERSVSSPSQ (78 aa)) lie on the Periplasmic side of the membrane. Positions 36–73 (IAVQQEGNDKLNERNQVLKEEIIDLKSGTEAIEERARN) form a coiled coil.

Belongs to the FtsB family. As to quaternary structure, part of a complex composed of FtsB, FtsL and FtsQ.

Its subcellular location is the cell inner membrane. Its function is as follows. Essential cell division protein. May link together the upstream cell division proteins, which are predominantly cytoplasmic, with the downstream cell division proteins, which are predominantly periplasmic. This Shewanella sp. (strain W3-18-1) protein is Cell division protein FtsB.